A 123-amino-acid chain; its full sequence is Integration host factor subunit alpha (123 aa).

It belongs to the bacterial histone-like protein family. Heterodimer of an alpha and a beta chain.

This protein is one of the two subunits of integration host factor, a specific DNA-binding protein that functions in genetic recombination as well as in transcriptional and translational control. The protein is Integration host factor subunit alpha of Polaromonas naphthalenivorans (strain CJ2).